We begin with the raw amino-acid sequence, 309 residues long: tRNA uridine(34) hydroxylase (309 aa).

In terms of domain architecture, Rhodanese spans 137 to 232 (RGDEVVFFDG…YGEKYGDKGL (96 aa)). The active-site Cysteine persulfide intermediate is the cysteine 192.

This sequence belongs to the TrhO family.

The enzyme catalyses uridine(34) in tRNA + AH2 + O2 = 5-hydroxyuridine(34) in tRNA + A + H2O. Catalyzes oxygen-dependent 5-hydroxyuridine (ho5U) modification at position 34 in tRNAs. The polypeptide is tRNA uridine(34) hydroxylase (Corynebacterium jeikeium (strain K411)).